A 72-amino-acid chain; its full sequence is Translation initiation factor IF-1 (72 aa).

The S1-like domain occupies 1 to 72; that stretch reads MSKEDMIEFS…TKGRITFRFK (72 aa).

It belongs to the IF-1 family. Component of the 30S ribosomal translation pre-initiation complex which assembles on the 30S ribosome in the order IF-2 and IF-3, IF-1 and N-formylmethionyl-tRNA(fMet); mRNA recruitment can occur at any time during PIC assembly.

It is found in the cytoplasm. Its function is as follows. One of the essential components for the initiation of protein synthesis. Stabilizes the binding of IF-2 and IF-3 on the 30S subunit to which N-formylmethionyl-tRNA(fMet) subsequently binds. Helps modulate mRNA selection, yielding the 30S pre-initiation complex (PIC). Upon addition of the 50S ribosomal subunit IF-1, IF-2 and IF-3 are released leaving the mature 70S translation initiation complex. The polypeptide is Translation initiation factor IF-1 (Acidiphilium cryptum (strain JF-5)).